Reading from the N-terminus, the 129-residue chain is Large ribosomal subunit protein bL12c (129 aa).

This sequence belongs to the bacterial ribosomal protein bL12 family. In terms of assembly, homodimer. Part of the ribosomal stalk of the 50S ribosomal subunit. Forms a multimeric L10(L12)X complex, where L10 forms an elongated spine to which 2 to 4 L12 dimers bind in a sequential fashion. Binds GTP-bound translation factors.

The protein resides in the plastid. It localises to the chloroplast. In terms of biological role, forms part of the ribosomal stalk which helps the ribosome interact with GTP-bound translation factors. Is thus essential for accurate translation. In Porphyra purpurea (Red seaweed), this protein is Large ribosomal subunit protein bL12c.